Reading from the N-terminus, the 595-residue chain is Actin-histidine N-methyltransferase (595 aa).

The segment at 1 to 22 (MGKKSRVKTQKSGTGATATVSP) is disordered. Over residues 10 to 20 (QKSGTGATATV) the composition is skewed to polar residues. Residues Arg75, 104–106 (EGF), Arg254, 275–279 (DMCNH), and 325–327 (SGF) contribute to the S-adenosyl-L-methionine site. The 221-residue stretch at 94 to 314 (EGFEMVNFKE…AGEQIYIFYG (221 aa)) folds into the SET domain. Ser513 carries the phosphoserine modification. Residues 549 to 573 (ENGLVNGENSIPNGTRSENENLNQE) are compositionally biased toward polar residues. The interval 549–595 (ENGLVNGENSIPNGTRSENENLNQEGSKRAVEDAKGSSSDSTDEVKE) is disordered. Residues 574–583 (GSKRAVEDAK) show a composition bias toward basic and acidic residues.

This sequence belongs to the class V-like SAM-binding methyltransferase superfamily. SETD3 actin-histidine methyltransferase family. As to quaternary structure, interacts with MYOD1. Post-translationally, phosphorylated by GSK3B, which is required for recognition by the SCF(FBXW7) complex and subsequent degradation. In terms of processing, ubiquitinated by the SCF(FBXW7) complex following phosphorylation by GSK3B, leading to its degradation by the proteasome.

The protein localises to the cytoplasm. It is found in the nucleus. The catalysed reaction is L-histidyl-[protein] + S-adenosyl-L-methionine = N(tele)-methyl-L-histidyl-[protein] + S-adenosyl-L-homocysteine + H(+). Functionally, protein-histidine N-methyltransferase that specifically mediates 3-methylhistidine (tele-methylhistidine) methylation of actin at 'His-73'. Histidine methylation of actin is required for smooth muscle contraction of the laboring uterus during delivery. Does not have protein-lysine N-methyltransferase activity and probably only catalyzes histidine methylation of actin. The protein is Actin-histidine N-methyltransferase of Plecturocebus moloch (Dusky titi monkey).